Reading from the N-terminus, the 96-residue chain is Aspartyl/glutamyl-tRNA(Asn/Gln) amidotransferase subunit C (96 aa).

The protein belongs to the GatC family. Heterotrimer of A, B and C subunits.

It catalyses the reaction L-glutamyl-tRNA(Gln) + L-glutamine + ATP + H2O = L-glutaminyl-tRNA(Gln) + L-glutamate + ADP + phosphate + H(+). It carries out the reaction L-aspartyl-tRNA(Asn) + L-glutamine + ATP + H2O = L-asparaginyl-tRNA(Asn) + L-glutamate + ADP + phosphate + 2 H(+). Its function is as follows. Allows the formation of correctly charged Asn-tRNA(Asn) or Gln-tRNA(Gln) through the transamidation of misacylated Asp-tRNA(Asn) or Glu-tRNA(Gln) in organisms which lack either or both of asparaginyl-tRNA or glutaminyl-tRNA synthetases. The reaction takes place in the presence of glutamine and ATP through an activated phospho-Asp-tRNA(Asn) or phospho-Glu-tRNA(Gln). This Symbiobacterium thermophilum (strain DSM 24528 / JCM 14929 / IAM 14863 / T) protein is Aspartyl/glutamyl-tRNA(Asn/Gln) amidotransferase subunit C.